The following is a 135-amino-acid chain: Translation initiation factor 2 subunit beta (135 aa).

Belongs to the eIF-2-beta/eIF-5 family. As to quaternary structure, heterotrimer composed of an alpha, a beta and a gamma chain.

Its function is as follows. eIF-2 functions in the early steps of protein synthesis by forming a ternary complex with GTP and initiator tRNA. The protein is Translation initiation factor 2 subunit beta of Methanobrevibacter smithii (strain ATCC 35061 / DSM 861 / OCM 144 / PS).